We begin with the raw amino-acid sequence, 197 residues long: Protein FAM219B (197 aa).

Disordered regions lie at residues 1–77 and 117–142; these read MATE…HRDH and DENL…YSSA. Phosphoserine is present on residues Ser-14, Ser-125, and Ser-127.

Belongs to the FAM219 family.

This is Protein FAM219B (Fam219b) from Mus musculus (Mouse).